Consider the following 362-residue polypeptide: [LysW]-lysine hydrolase (362 aa).

Residue His69 participates in Zn(2+) binding. Asp71 is a catalytic residue. Asp94 is a binding site for Zn(2+). Residue Glu127 is the Proton acceptor of the active site. Zn(2+)-binding residues include Glu128, Glu151, and His334.

This sequence belongs to the peptidase M20A family. LysK subfamily. Requires Zn(2+) as cofactor. The cofactor is Co(2+).

The protein resides in the cytoplasm. The enzyme catalyses [amino-group carrier protein]-C-terminal-gamma-(L-lysyl)-L-glutamate + H2O = [amino-group carrier protein]-C-terminal-L-glutamate + L-lysine. It functions in the pathway amino-acid biosynthesis; L-lysine biosynthesis via AAA pathway; L-lysine from L-alpha-aminoadipate (Thermus route): step 5/5. Functionally, catalyzes the release of L-lysine from [LysW]-gamma-L-lysine. The polypeptide is [LysW]-lysine hydrolase (Deinococcus radiodurans (strain ATCC 13939 / DSM 20539 / JCM 16871 / CCUG 27074 / LMG 4051 / NBRC 15346 / NCIMB 9279 / VKM B-1422 / R1)).